Here is a 225-residue protein sequence, read N- to C-terminus: UPF0758 protein BAMEG_4721 (225 aa).

An MPN domain is found at S103–I225. 3 residues coordinate Zn(2+): H174, H176, and D187. The short motif at H174 to D187 is the JAMM motif element.

Belongs to the UPF0758 family.

In Bacillus anthracis (strain CDC 684 / NRRL 3495), this protein is UPF0758 protein BAMEG_4721.